The following is a 124-amino-acid chain: MNYLLVFVGGGLGATVRHAVNMICARAFGTHFPFGTFLINVSGSVVMGLIAGYLAFRGSAAQPWRLFVMTGVLGGYTTFSAFSLDTALLYERGEIGLAALYAIGSVVLAVVGLFAGLALVRHLT.

The next 3 membrane-spanning stretches (helical) occupy residues 36 to 56, 66 to 86, and 100 to 120; these read TFLI…YLAF, LFVM…SLDT, and LYAI…LALV. Na(+) is bound by residues Gly-74 and Thr-77.

This sequence belongs to the fluoride channel Fluc/FEX (TC 1.A.43) family.

Its subcellular location is the cell inner membrane. It carries out the reaction fluoride(in) = fluoride(out). Its activity is regulated as follows. Na(+) is not transported, but it plays an essential structural role and its presence is essential for fluoride channel function. Its function is as follows. Fluoride-specific ion channel. Important for reducing fluoride concentration in the cell, thus reducing its toxicity. The protein is Fluoride-specific ion channel FluC 2 of Nitrobacter hamburgensis (strain DSM 10229 / NCIMB 13809 / X14).